The following is a 186-amino-acid chain: GMP synthase [glutamine-hydrolyzing] subunit A (186 aa).

The Glutamine amidotransferase type-1 domain maps to 3–186; the sequence is MILIINNHGQ…FENFYDVCRS (184 aa). Cys-77 acts as the Nucleophile in catalysis. Active-site residues include His-164 and Glu-166.

In terms of assembly, heterodimer composed of a glutamine amidotransferase subunit (A) and a GMP-binding subunit (B).

The enzyme catalyses XMP + L-glutamine + ATP + H2O = GMP + L-glutamate + AMP + diphosphate + 2 H(+). The protein operates within purine metabolism; GMP biosynthesis; GMP from XMP (L-Gln route): step 1/1. In terms of biological role, catalyzes the synthesis of GMP from XMP. This Methanothermobacter thermautotrophicus (strain ATCC 29096 / DSM 1053 / JCM 10044 / NBRC 100330 / Delta H) (Methanobacterium thermoautotrophicum) protein is GMP synthase [glutamine-hydrolyzing] subunit A.